A 106-amino-acid polypeptide reads, in one-letter code: uncharacterized protein (106 aa).

Disordered regions lie at residues 33–64 and 87–106; these read FKTS…SRND and NLTG…AVSK. Over residues 52–63 the composition is skewed to basic and acidic residues; it reads DGKKQESLESRN. The segment covering 87-99 has biased composition (polar residues); it reads NLTGLESGGSSPP.

Its subcellular location is the mitochondrion. This is an uncharacterized protein from Arabidopsis thaliana (Mouse-ear cress).